The primary structure comprises 400 residues: Acetate kinase (400 aa).

Asparagine 7 contributes to the Mg(2+) binding site. Residue lysine 14 participates in ATP binding. A substrate-binding site is contributed by arginine 91. The active-site Proton donor/acceptor is aspartate 148. Residues 208–212, 284–286, and 332–336 each bind ATP; these read HLGNG, DMR, and GVGEN. Mg(2+) is bound at residue glutamate 384.

It belongs to the acetokinase family. As to quaternary structure, homodimer. Mg(2+) serves as cofactor. It depends on Mn(2+) as a cofactor.

It localises to the cytoplasm. The catalysed reaction is acetate + ATP = acetyl phosphate + ADP. Its pathway is metabolic intermediate biosynthesis; acetyl-CoA biosynthesis; acetyl-CoA from acetate: step 1/2. In terms of biological role, catalyzes the formation of acetyl phosphate from acetate and ATP. Can also catalyze the reverse reaction. This chain is Acetate kinase, found in Coprothermobacter proteolyticus (strain ATCC 35245 / DSM 5265 / OCM 4 / BT).